The primary structure comprises 202 residues: Putative scarecrow-like protein 16 (202 aa).

The segment at 1–26 (MQIPTLIDSMANKLHKKPPPLLKLTV) is VHIID. The 202-residue stretch at 1–202 (MQIPTLIDSM…RVERLEPKSR (202 aa)) folds into the GRAS domain. The leucine repeat II (LRII) stretch occupies residues 45 to 82 (ELGSKLVNFATTRNVAMEFRIISSSYSDGLSSLIEQLR). Positions 92–184 (LVVNCHMMLH…EADISWKIDN (93 aa)) are PFYRE. The SAW stretch occupies residues 187–202 (AKEGAERVERLEPKSR).

It belongs to the GRAS family. As to expression, expressed in seedlings, leaves and flowers.

The protein localises to the nucleus. In terms of biological role, probable transcription factor involved in plant development. The protein is Putative scarecrow-like protein 16 (SCL16) of Arabidopsis thaliana (Mouse-ear cress).